A 299-amino-acid chain; its full sequence is Probable GTP 3',8-cyclase (299 aa).

One can recognise a Radical SAM core domain in the interval 4–229; that stretch reads LHNREIKSLR…MQNRKKYLVD (226 aa). Arg13 contacts GTP. [4Fe-4S] cluster is bound by residues Cys20 and Cys24. Residue Tyr26 participates in S-adenosyl-L-methionine binding. [4Fe-4S] cluster is bound at residue Cys27. Lys61 is a GTP binding site. Residue Gly65 participates in S-adenosyl-L-methionine binding. Thr94 provides a ligand contact to GTP. Ser118 serves as a coordination point for S-adenosyl-L-methionine. GTP is bound at residue Lys154. Positions 245 and 248 each coordinate [4Fe-4S] cluster. 250-252 serves as a coordination point for GTP; it reads RIR. Position 262 (Cys262) interacts with [4Fe-4S] cluster.

Belongs to the radical SAM superfamily. MoaA family. The cofactor is [4Fe-4S] cluster.

It catalyses the reaction GTP + AH2 + S-adenosyl-L-methionine = (8S)-3',8-cyclo-7,8-dihydroguanosine 5'-triphosphate + 5'-deoxyadenosine + L-methionine + A + H(+). It participates in cofactor biosynthesis; molybdopterin biosynthesis. Functionally, catalyzes the cyclization of GTP to (8S)-3',8-cyclo-7,8-dihydroguanosine 5'-triphosphate. The chain is Probable GTP 3',8-cyclase from Methanococcus aeolicus (strain ATCC BAA-1280 / DSM 17508 / OCM 812 / Nankai-3).